A 713-amino-acid polypeptide reads, in one-letter code: Nucleoporin NUP82 (713 aa).

The interaction with NUP116 stretch occupies residues 1 to 409 (MSQSSRLSAL…SDLNPLAGLK (409 aa)). An interaction with NSP1 and NUP159 region spans residues 463–713 (TSISTEKSDT…VSQEFTTKTQ (251 aa)). The stretch at 582 to 713 (EAQNKKWDAQ…VSQEFTTKTQ (132 aa)) forms a coiled coil. The short motif at 607–623 (KKLSQIAESNKFKEKKI) is the Bipartite nuclear localization signal element.

In terms of assembly, component of the nuclear pore complex (NPC). NPC constitutes the exclusive means of nucleocytoplasmic transport. NPCs allow the passive diffusion of ions and small molecules and the active, nuclear transport receptor-mediated bidirectional transport of macromolecules such as proteins, RNAs, ribonucleoparticles (RNPs), and ribosomal subunits across the nuclear envelope. Due to its 8-fold rotational symmetry, all subunits are present with 8 copies or multiples thereof. NUP82 is part of the NUP82 subcomplex. This subcomplex is the base for interactions with NUP116 and GLE2, with NUP42 and GLE1 and with DYN2.

The protein localises to the nucleus. It is found in the nuclear pore complex. Its subcellular location is the nucleus membrane. Functionally, functions as a component of the nuclear pore complex (NPC). NPC components, collectively referred to as nucleoporins (NUPs), can play the role of both NPC structural components and of docking or interaction partners for transiently associated nuclear transport factors. It is specifically involved as part of the NUP82-NUP159-NSP1 subcomplex in nuclear mRNA and pre-ribosome export by acting as a linker tethering nucleoporins that are directly involved in nuclear transport to the NPC via its coiled-coil domain. The polypeptide is Nucleoporin NUP82 (NUP82) (Saccharomyces cerevisiae (strain ATCC 204508 / S288c) (Baker's yeast)).